A 420-amino-acid polypeptide reads, in one-letter code: Glycogen synthase kinase-3 beta (420 aa).

The segment covering 1-22 (MSGRPRTTSFAESCKPVQQPSA) has biased composition (polar residues). Residues 1–53 (MSGRPRTTSFAESCKPVQQPSAFGSMKVSRDKDGSKVTTVVATPGQGPDRPQE) are disordered. S9 carries the post-translational modification Phosphoserine; by PKB/AKT1, RPS6KA3 and SGK3. A lipid anchor (S-palmitoyl cysteine) is attached at C14. The Protein kinase domain maps to 56 to 340 (YTDTKVIGNG…PLEACAHSFF (285 aa)). ATP-binding positions include 62 to 70 (IGNGSFGVV) and K85. The active-site Proton acceptor is the D181. The residue at position 216 (Y216) is a Phosphotyrosine. The disordered stretch occupies residues 385 to 420 (QAAASPPANATAASDTNAGDRGQTNNAASASASNST). Low complexity-rich tracts occupy residues 386–401 (AAAS…SDTN) and 409–420 (NNAASASASNST). S389 is modified (phosphoserine).

This sequence belongs to the protein kinase superfamily. CMGC Ser/Thr protein kinase family. GSK-3 subfamily. In terms of assembly, monomer. Interacts with DAB2IP (via C2 domain); the interaction stimulates GSK3B kinase activation. Interacts (via C2 domain) with PPP2CA. Interacts with ARRB2, AXIN1, CABYR, DISC1, MMP2, MUC1, NIN, PRUNE1 and ZBED3. Interacts with AXIN1; the interaction mediates hyperphosphorylation of CTNNB1 leading to its ubiquitination and destruction. Interacts with and phosphorylates SNAI1. Interacts with DNM1L (via a C-terminal domain). Found in a complex composed of MACF1, APC, AXIN1, CTNNB1 and GSK3B. Interacts with SGK3. Interacts with the CLOCK-BMAL1 heterodimer. Interacts with the BMAL1. Interacts with CTNND2. The complex composed, at least, of APC, CTNNB1 and GSK3B interacts with JPT1; the interaction requires the inactive form of GSK3B (phosphorylated at 'Ser-9'). Forms a complex composed of PRKAR2A or PRKAR2B, GSK3B and GSKIP through GSKIP interaction; facilitates PKA-induced phosphorylation and regulates GSK3B activity. Interacts with GSKIP. Interacts with GID8. Interacts with PIWIL2. Interacts with LMBR1L. Interacts with DDX3X. Interacts with BIRC2. Interacts with TNFRSF10B; TNFRSF10B stimulation inhibits GSK3B kinase activity. Found in a complex with SLC39A6, SLC39A10 and with GSK3B that controls NCAM1 phosphorylation. Interacts with PKP3 (via ARM repeats); the interaction may be involved in PKP3 protein degradation. In terms of processing, phosphorylated by AKT1 and ILK1. Upon insulin-mediated signaling, the activated PKB/AKT1 and RPS6KA3 protein kinases phosphorylate and deactivate GSK3B, resulting in the dephosphorylation and activation of GYS1. Activated by phosphorylation at Tyr-216. Inactivated by phosphorylation at Ser-9. Phosphorylated in a circadian manner in the hippocampus. Post-translationally, mono-ADP-ribosylation by PARP10 negatively regulates kinase activity. Palmitoylated. Palmitoylation by ZDHHC4 prevents AKT1-mediated phosphorylation.

The protein localises to the cytoplasm. It localises to the nucleus. It is found in the membrane. Its subcellular location is the cell membrane. It catalyses the reaction L-seryl-[tau protein] + ATP = O-phospho-L-seryl-[tau protein] + ADP + H(+). It carries out the reaction L-threonyl-[tau protein] + ATP = O-phospho-L-threonyl-[tau protein] + ADP + H(+). The catalysed reaction is L-seryl-[protein] + ATP = O-phospho-L-seryl-[protein] + ADP + H(+). The enzyme catalyses L-threonyl-[protein] + ATP = O-phospho-L-threonyl-[protein] + ADP + H(+). With respect to regulation, activated by phosphorylation at Tyr-216. In response to insulin, inhibited by phosphorylation at Ser-9 by PKB/AKT1; phosphorylation at this site causes a conformational change, preventing access of substrates to the active site. Inhibited by IL22 treatment which also triggers phosphorylation at Ser-9, promoting inactivation. Inhibited by lithium. Its function is as follows. Constitutively active protein kinase that acts as a negative regulator in the hormonal control of glucose homeostasis, Wnt signaling and regulation of transcription factors and microtubules, by phosphorylating and inactivating glycogen synthase (GYS1 or GYS2), EIF2B, CTNNB1/beta-catenin, APC, AXIN1, DPYSL2/CRMP2, JUN, NFATC1/NFATC, MAPT/TAU and MACF1. Requires primed phosphorylation of the majority of its substrates. In skeletal muscle, contributes to insulin regulation of glycogen synthesis by phosphorylating and inhibiting GYS1 activity and hence glycogen synthesis. May also mediate the development of insulin resistance by regulating activation of transcription factors. Regulates protein synthesis by controlling the activity of initiation factor 2B (EIF2BE/EIF2B5) in the same manner as glycogen synthase. In Wnt signaling, GSK3B forms a multimeric complex with APC, AXIN1 and CTNNB1/beta-catenin and phosphorylates the N-terminus of CTNNB1 leading to its degradation mediated by ubiquitin/proteasomes. Phosphorylates JUN at sites proximal to its DNA-binding domain, thereby reducing its affinity for DNA. Phosphorylates NFATC1/NFATC on conserved serine residues promoting NFATC1/NFATC nuclear export, shutting off NFATC1/NFATC gene regulation, and thereby opposing the action of calcineurin. Phosphorylates MAPT/TAU on 'Thr-548', decreasing significantly MAPT/TAU ability to bind and stabilize microtubules. MAPT/TAU is the principal component of neurofibrillary tangles in Alzheimer disease. Plays an important role in ERBB2-dependent stabilization of microtubules at the cell cortex. Phosphorylates MACF1, inhibiting its binding to microtubules which is critical for its role in bulge stem cell migration and skin wound repair. Probably regulates NF-kappa-B (NFKB1) at the transcriptional level and is required for the NF-kappa-B-mediated anti-apoptotic response to TNF-alpha (TNF/TNFA). Negatively regulates replication in pancreatic beta-cells, resulting in apoptosis, loss of beta-cells and diabetes. Through phosphorylation of the anti-apoptotic protein MCL1, may control cell apoptosis in response to growth factors deprivation. Phosphorylates MUC1 in breast cancer cells, decreasing the interaction of MUC1 with CTNNB1/beta-catenin. Is necessary for the establishment of neuronal polarity and axon outgrowth. Phosphorylates MARK2, leading to inhibition of its activity. Phosphorylates SIK1 at 'Thr-182', leading to sustainment of its activity. Phosphorylates ZC3HAV1 which enhances its antiviral activity. Phosphorylates SNAI1, leading to its ubiquitination and proteasomal degradation. Phosphorylates SFPQ at 'Thr-687' upon T-cell activation. Phosphorylates NR1D1 st 'Ser-55' and 'Ser-59' and stabilizes it by protecting it from proteasomal degradation. Regulates the circadian clock via phosphorylation of the major clock components including BMAL1, CLOCK and PER2. Phosphorylates CLOCK AT 'Ser-427' and targets it for proteasomal degradation. Phosphorylates BMAL1 at 'Ser-17' and 'Ser-21' and primes it for ubiquitination and proteasomal degradation. Phosphorylates FBXL2 at 'Thr-404' and primes it for ubiquitination by the SCF(FBXO3) complex and proteasomal degradation. Phosphorylates OGT at 'Ser-3' or 'Ser-4' which positively regulates its activity. Phosphorylates MYCN in neuroblastoma cells which may promote its degradation. Regulates the circadian rhythmicity of hippocampal long-term potentiation and BMAL1 and PER2 expression. Acts as a regulator of autophagy by mediating phosphorylation of KAT5/TIP60 under starvation conditions, activating KAT5/TIP60 acetyltransferase activity and promoting acetylation of key autophagy regulators, such as ULK1 and RUBCNL/Pacer. Negatively regulates extrinsic apoptotic signaling pathway via death domain receptors. Promotes the formation of an anti-apoptotic complex, made of DDX3X, BRIC2 and GSK3B, at death receptors, including TNFRSF10B. The anti-apoptotic function is most effective with weak apoptotic signals and can be overcome by stronger stimulation. Phosphorylates E2F1, promoting the interaction between E2F1 and USP11, stabilizing E2F1 and promoting its activity. Phosphorylates mTORC2 complex component RICTOR at 'Ser-1235' in response to endoplasmic stress, inhibiting mTORC2. Phosphorylates FXR1, promoting FXR1 ubiquitination by the SCF(FBXO4) complex and FXR1 degradation by the proteasome. Phosphorylates interleukin-22 receptor subunit IL22RA1, preventing its proteasomal degradation. The chain is Glycogen synthase kinase-3 beta from Rattus norvegicus (Rat).